A 679-amino-acid polypeptide reads, in one-letter code: Glycine--tRNA ligase beta subunit (679 aa).

It belongs to the class-II aminoacyl-tRNA synthetase family. Tetramer of two alpha and two beta subunits.

The protein localises to the cytoplasm. The enzyme catalyses tRNA(Gly) + glycine + ATP = glycyl-tRNA(Gly) + AMP + diphosphate. The protein is Glycine--tRNA ligase beta subunit of Streptococcus mutans serotype c (strain ATCC 700610 / UA159).